The following is a 565-amino-acid chain: Genetic interactor of prohibitins 3, mitochondrial (565 aa).

The CP-type G domain maps to 129 to 315; that stretch reads TDVLEKIPRG…IYDLPGFTTN (187 aa).

Belongs to the TRAFAC class YlqF/YawG GTPase family. GEP3 subfamily.

It is found in the mitochondrion. May be involved in the mitochondrial lipid metabolism. The polypeptide is Genetic interactor of prohibitins 3, mitochondrial (GEP3) (Zygosaccharomyces rouxii (strain ATCC 2623 / CBS 732 / NBRC 1130 / NCYC 568 / NRRL Y-229)).